The sequence spans 227 residues: Cytidylate kinase (227 aa).

12–20 (GPSGAGKGT) contacts ATP.

This sequence belongs to the cytidylate kinase family. Type 1 subfamily.

It is found in the cytoplasm. It carries out the reaction CMP + ATP = CDP + ADP. The enzyme catalyses dCMP + ATP = dCDP + ADP. The sequence is that of Cytidylate kinase from Enterobacter sp. (strain 638).